The following is a 304-amino-acid chain: Quinolinate synthase (304 aa).

Iminosuccinate contacts are provided by His-24 and Ser-41. Cys-86 is a [4Fe-4S] cluster binding site. Iminosuccinate is bound by residues 112–114 (YVN) and Ser-129. Residue Cys-171 coordinates [4Fe-4S] cluster. Residues 197 to 199 (HPE) and Thr-214 each bind iminosuccinate. Cys-259 is a [4Fe-4S] cluster binding site.

Belongs to the quinolinate synthase family. Type 2 subfamily. [4Fe-4S] cluster serves as cofactor.

It is found in the cytoplasm. The catalysed reaction is iminosuccinate + dihydroxyacetone phosphate = quinolinate + phosphate + 2 H2O + H(+). It functions in the pathway cofactor biosynthesis; NAD(+) biosynthesis; quinolinate from iminoaspartate: step 1/1. Its function is as follows. Catalyzes the condensation of iminoaspartate with dihydroxyacetone phosphate to form quinolinate. This is Quinolinate synthase from Methanosarcina barkeri (strain Fusaro / DSM 804).